Here is a 373-residue protein sequence, read N- to C-terminus: MKLFFRFLTLVAVLAMSLADVAPAWALTSRIKDIASLQAGRDNQLIGYGLIVGLQGTGDGFRASPFTEQSMRAMLQNLGISTQGGQSNAKNTAAVMVTANLPPFASPGSRIDVTVSSLGDATSLRGGTLVMTSLSGADGQIYAVAQGAAIVTGFQAQGQAATVTEGVTTAGRVPGGAIIERELPSRFKDSVNLVLQLRNPDFSTAIRIADIVNGYASARFGGPVAEAKDSQEVVIQKPRTADLTRLMADIENLIVETDTPAKVVINERTGTIVIGSDVRVSPVAVSYGTLTVQVTETPQIIQPEPFSQGRTAVQPQTDIAAEQTGGRVAIIDGPDLRTLVAGLNNIGVKPDGIIAILQGIKSAGALQAELVLQ.

A signal peptide spans 1–26; sequence MKLFFRFLTLVAVLAMSLADVAPAWA.

Belongs to the FlgI family. The basal body constitutes a major portion of the flagellar organelle and consists of four rings (L,P,S, and M) mounted on a central rod.

It localises to the periplasm. The protein localises to the bacterial flagellum basal body. Its function is as follows. Assembles around the rod to form the L-ring and probably protects the motor/basal body from shearing forces during rotation. The chain is Flagellar P-ring protein from Rhizobium leguminosarum bv. trifolii (strain WSM2304).